The primary structure comprises 165 residues: Lipoprotein signal peptidase (165 aa).

Transmembrane regions (helical) follow at residues 10 to 30, 42 to 62, 71 to 91, 105 to 125, and 133 to 153; these read LKWL…KYWV, VLPG…GLFT, LFVW…YKLI, IGGA…VDFI, and HWPT…IVTI. Residues aspartate 123 and aspartate 141 contribute to the active site.

It belongs to the peptidase A8 family.

The protein localises to the cell inner membrane. It catalyses the reaction Release of signal peptides from bacterial membrane prolipoproteins. Hydrolyzes -Xaa-Yaa-Zaa-|-(S,diacylglyceryl)Cys-, in which Xaa is hydrophobic (preferably Leu), and Yaa (Ala or Ser) and Zaa (Gly or Ala) have small, neutral side chains.. It functions in the pathway protein modification; lipoprotein biosynthesis (signal peptide cleavage). This protein specifically catalyzes the removal of signal peptides from prolipoproteins. In Blochmanniella pennsylvanica (strain BPEN), this protein is Lipoprotein signal peptidase.